A 1131-amino-acid chain; its full sequence is Phytochrome a (1131 aa).

Low complexity predominate over residues 1–23 (MSSSRPAHSSSSSSRTRQSSQAR). Residues 1–26 (MSSSRPAHSSSSSSRTRQSSQARILA) are disordered. The GAF domain occupies 219–404 (SMEALCNTVV…VFAVHVNKEF (186 aa)). Residue cysteine 324 participates in phytochromobilin binding. PAS domains are found at residues 620–690 (VTSE…LQGK) and 750–834 (VEGD…LAGE). One can recognise a Histidine kinase domain in the interval 904–1124 (YMRHAINKPL…TFILTAELAA (221 aa)).

This sequence belongs to the phytochrome family. In terms of assembly, homodimer. Contains one covalently linked phytochromobilin chromophore.

Regulatory photoreceptor which exists in two forms that are reversibly interconvertible by light: the Pr form that absorbs maximally in the red region of the spectrum and the Pfr form that absorbs maximally in the far-red region. Photoconversion of Pr to Pfr induces an array of morphogenic responses, whereas reconversion of Pfr to Pr cancels the induction of those responses. Pfr controls the expression of a number of nuclear genes including those encoding the small subunit of ribulose-bisphosphate carboxylase, chlorophyll A/B binding protein, protochlorophyllide reductase, rRNA, etc. It also controls the expression of its own gene(s) in a negative feedback fashion. The sequence is that of Phytochrome a (PHYA) from Sorghum bicolor (Sorghum).